The chain runs to 445 residues: Chromosome partition protein MukF (445 aa).

The interval 213–241 is leucine-zipper; it reads LSETSSTLRELQDTLQAASDELQTQILDI.

Belongs to the MukF family. As to quaternary structure, interacts, and probably forms a ternary complex, with MukE and MukB via its C-terminal region. The complex formation is stimulated by calcium or magnesium. It is required for an interaction between MukE and MukB.

The protein localises to the cytoplasm. The protein resides in the nucleoid. In terms of biological role, involved in chromosome condensation, segregation and cell cycle progression. May participate in facilitating chromosome segregation by condensation DNA from both sides of a centrally located replisome during cell division. Not required for mini-F plasmid partitioning. Probably acts via its interaction with MukB and MukE. Overexpression results in anucleate cells. It has a calcium binding activity. This chain is Chromosome partition protein MukF, found in Vibrio parahaemolyticus serotype O3:K6 (strain RIMD 2210633).